A 745-amino-acid chain; its full sequence is Translation initiation factor IF-2 (745 aa).

Residues 1-154 (MSDKPRRDTG…PAARPVVRPR (154 aa)) form a disordered region. A compositionally biased stretch (polar residues) spans 36–56 (TGRSPNASTGGNRSAGNQAGN). Residues 68-98 (ATTPAPNRNTPPAGARQGGAANARTGTPPVA) are compositionally biased toward low complexity. Positions 99 to 113 (RGGGGGVTPPTGRGG) are enriched in gly residues. The span at 114-126 (NNPRAARNQPRSR) shows a compositional bias: low complexity. Basic and acidic residues predominate over residues 127-138 (QQPEEREREHVL). The tr-type G domain occupies 241–410 (PRPPVVTIMG…LLVADLEDLR (170 aa)). The segment at 250–257 (GHVDHGKT) is G1. 250–257 (GHVDHGKT) contributes to the GTP binding site. Residues 275–279 (GITQH) form a G2 region. Residues 296–299 (DTPG) form a G3 region. Residues 296–300 (DTPGH) and 350–353 (NKID) contribute to the GTP site. Positions 350-353 (NKID) are G4. The interval 386–388 (SAR) is G5.

It belongs to the TRAFAC class translation factor GTPase superfamily. Classic translation factor GTPase family. IF-2 subfamily.

It is found in the cytoplasm. Functionally, one of the essential components for the initiation of protein synthesis. Protects formylmethionyl-tRNA from spontaneous hydrolysis and promotes its binding to the 30S ribosomal subunits. Also involved in the hydrolysis of GTP during the formation of the 70S ribosomal complex. The polypeptide is Translation initiation factor IF-2 (Chloroflexus aurantiacus (strain ATCC 29366 / DSM 635 / J-10-fl)).